A 730-amino-acid polypeptide reads, in one-letter code: Ribosomal RNA large subunit methyltransferase K/L (730 aa).

In terms of domain architecture, THUMP spans 46–157 (TAYRLCVWSR…RGEAILSLDL (112 aa)). Residues 395 to 418 (ERREAQPEGTEVRQQAPQASEPAR) are disordered.

Belongs to the methyltransferase superfamily. RlmKL family.

The protein resides in the cytoplasm. It catalyses the reaction guanosine(2445) in 23S rRNA + S-adenosyl-L-methionine = N(2)-methylguanosine(2445) in 23S rRNA + S-adenosyl-L-homocysteine + H(+). The enzyme catalyses guanosine(2069) in 23S rRNA + S-adenosyl-L-methionine = N(2)-methylguanosine(2069) in 23S rRNA + S-adenosyl-L-homocysteine + H(+). Its function is as follows. Specifically methylates the guanine in position 2445 (m2G2445) and the guanine in position 2069 (m7G2069) of 23S rRNA. In Pseudomonas putida (strain GB-1), this protein is Ribosomal RNA large subunit methyltransferase K/L.